The following is a 225-amino-acid chain: Putative O-phosphotransferase MT2714 (225 aa).

Residue 30 to 37 (GGSSAGKT) coordinates ATP.

The protein to S.violaceus chloramphenicol 3-O phosphotransferase.

This is Putative O-phosphotransferase MT2714 from Mycobacterium tuberculosis (strain CDC 1551 / Oshkosh).